The following is a 247-amino-acid chain: PF03932 family protein CutC (247 aa).

Belongs to the CutC family.

It is found in the cytoplasm. The protein is PF03932 family protein CutC of Vibrio campbellii (strain ATCC BAA-1116).